A 25-amino-acid polypeptide reads, in one-letter code: Pregnancy-associated glycoprotein 74 (25 aa).

2 N-linked (GlcNAc...) asparagine glycosylation sites follow: asparagine 4 and asparagine 21.

The protein belongs to the peptidase A1 family. In terms of processing, N-glycosylated. Placental cotyledons.

The protein resides in the secreted. Its subcellular location is the extracellular space. The sequence is that of Pregnancy-associated glycoprotein 74 from Bison bison (American bison).